Consider the following 626-residue polypeptide: UvrABC system protein C (626 aa).

A GIY-YIG domain is found at 20–97; sequence ECSGVYKMLD…IKKFQPKFNI (78 aa). A UVR domain is found at 207–242; it reads IALQANLSKKMQELSSQMRFEEAAEIRDRIKALSYV.

It belongs to the UvrC family. As to quaternary structure, interacts with UvrB in an incision complex.

The protein localises to the cytoplasm. In terms of biological role, the UvrABC repair system catalyzes the recognition and processing of DNA lesions. UvrC both incises the 5' and 3' sides of the lesion. The N-terminal half is responsible for the 3' incision and the C-terminal half is responsible for the 5' incision. This chain is UvrABC system protein C, found in Rickettsia prowazekii (strain Madrid E).